Here is a 232-residue protein sequence, read N- to C-terminus: Ubiquinone biosynthesis O-methyltransferase (232 aa).

4 residues coordinate S-adenosyl-L-methionine: R36, G55, D76, and M120.

Belongs to the methyltransferase superfamily. UbiG/COQ3 family.

The enzyme catalyses a 3-demethylubiquinol + S-adenosyl-L-methionine = a ubiquinol + S-adenosyl-L-homocysteine + H(+). The catalysed reaction is a 3-(all-trans-polyprenyl)benzene-1,2-diol + S-adenosyl-L-methionine = a 2-methoxy-6-(all-trans-polyprenyl)phenol + S-adenosyl-L-homocysteine + H(+). The protein operates within cofactor biosynthesis; ubiquinone biosynthesis. Functionally, O-methyltransferase that catalyzes the 2 O-methylation steps in the ubiquinone biosynthetic pathway. This Burkholderia ambifaria (strain MC40-6) protein is Ubiquinone biosynthesis O-methyltransferase.